Consider the following 1495-residue polypeptide: MTAYSGSPSKPGNNNSYLNRYVENLGTNVTPPLRPQSSSKINSSLNIASPSHLKTKTSASNSSATILSKKVESSVSKLKPSLPNKLVGKYTVDLSNYSKIELRYYEFLCRVSEVKIWIEAVIEEALPSEIELCVGDSLRNGVFLAKLTQRINPDLTTVIFPAGDKLQFKHTQNINAFFGLVEHVGVPDSFRFELQDLYNKKNIPQVFETLHILISMINKKWPGKTPALTNVSGQISFTKEEIAACKKAWPRIRDFKSLGTNINTAPASPEEPKEKRSGLIKDFNKFERPNIPVEEILITPRKNITDANCSDFSNTPSPYNEAPKMSNLDVVVEKRKFTPIEPSLLGPTPSLEYSPIKNKSLSYYSPTISKYLTYDTEFYTRRSRAREEDLNYYQTFKYSPSHYSPMRRERMTEEQFLEKVVQLQNICRGVNTRFNLYIQKRLLNLFEQDILRFQACLRGNKFRVLSSMYLPIRRAKIDVPHVEAIQSRIKGSRIRYKYDKLKFTLSRFSCTVELLQAYCRSKLLKTTVNTKLNDIEISHYPLTKLQSYMRASYVRKKVMSLNTKLNDERESIMKFSAIIRGNVVRCSEDAILSAVHDVHKENISKLQSLIRGIFTRSCLASIIYSLGKENCNIIQLSACIRGNAVRHKVQSLFAPENNLSETVHDLQGLVRGILVRYTLDLVDDIVEYNNLALFQAFSRGALVRESLDQKSSFYKRNVRSVIMIQSWIRKSLQRSAYLELLDCPNPSLWAVKKFVHLLNGTATIEEVQNQLESCQASLDSENMKKERLLKSIRQQLNINGVLDKFGLLKDKDHELGISDSTIPKSKYQKYEKLFYMLQVDPSYWKLLYLKEPEFVAKNVYMTFGTVNQRMNDRERSYFTRFVCEMLQNAINEAPSIESFLDNRSQFWQTILQDFLRRESPEFFSIIVPVLDYLSDPVVDFESDPYKIYQEIHGFSSPQHCSPVDDASTKNKFIDNLRCLWHAIEMVAEIYTRKVHTIPVEIRYLCTKIFCYAADKNIEEIDSLRAISSILVNVFVSEYLVNREYYGYKDSNVQKNNQKIDILMKSLATVFEIKNFDGFLDPLNQYANEIKPHIKDVLYNVLVDPEYEQEGDRLIYLDMVSPSPKLELLTEKVLEISGKFEEYLNEFPEADILHDILEKNLDNSSFPRSGRVTLELDASAYRFLVSDDKMRKIYDQVKRAFVYMMQIEDVDTNLYDLSISTILPQDEPNFANFLEQNPKIRDDPMIQKLKPLKYFTLKNVTLKKIHELESTGTFCSSDNKLQNFLNDIANTIKNPNYAIDYVTQEIYITKETLTKISEMNHSLDIELSRLKKHVDHTIKDFQKAKDFSPVHKSKFGNFKNAVKKVQGRERSELQGMKFKWNTKQLYERGVLKTIRGEKLAELTVKVFGSSGPKFPDIIFKISTSDGSRFGIQMIDKRKGPDKRYSDDVDSFSFKDLIKTQVEPKIETWKLFHSNVVVNNSQLLHLIVSFFYKRNAL.

In terms of domain architecture, Calponin-homology (CH) spans 108–221 (LCRVSEVKIW…ILISMINKKW (114 aa)). A Phosphothreonine modification is found at threonine 264. A Phosphoserine modification is found at serine 268. Threonine 299 carries the phosphothreonine modification. IQ domains follow at residues 447–467 (EQDI…VLSS), 538–567 (SHYP…KLND), 568–597 (ERES…AVHD), 599–628 (HKEN…SLGK), 629–658 (ENCN…PENN), 687–716 (EYNN…FYKR), and 717–746 (NVRS…CPNP). A coiled-coil region spans residues 759 to 798 (NGTATIEEVQNQLESCQASLDSENMKKERLLKSIRQQLNI). The 225-residue stretch at 876–1100 (SYFTRFVCEM…PHIKDVLYNV (225 aa)) folds into the Ras-GAP domain.

As to quaternary structure, interacts with AFR1. Interacts with AKR1. Interacts with activated CDC42. Interacts with calmodulin CMD1. Interacts with myosin MYO1 and its light chain MLC1. Interacts with BUD4. Interacts with INN1. Interacts with SEC3. Interacts with TEM1.

The protein resides in the bud neck. Required for the assembly and the contraction of the actomyosin ring at the bud neck during cytokinesis. Seems to be involved in additional tasks during cell division like axial bud-site selection and targeted secretion by recruiting the spatial landmark BUD4, the septin CDC12 and the secretion landmark SEC3 to the bud neck. May be regulated by calcium ions. The chain is Ras GTPase-activating-like protein IQG1 (IQG1) from Saccharomyces cerevisiae (strain ATCC 204508 / S288c) (Baker's yeast).